Here is a 518-residue protein sequence, read N- to C-terminus: Bifunctional purine biosynthesis protein PurH (518 aa).

An MGS-like domain is found at 1–146 (MSPIALLSVS…KNHQDVLVVT (146 aa)).

The protein belongs to the PurH family.

It catalyses the reaction (6R)-10-formyltetrahydrofolate + 5-amino-1-(5-phospho-beta-D-ribosyl)imidazole-4-carboxamide = 5-formamido-1-(5-phospho-D-ribosyl)imidazole-4-carboxamide + (6S)-5,6,7,8-tetrahydrofolate. The enzyme catalyses IMP + H2O = 5-formamido-1-(5-phospho-D-ribosyl)imidazole-4-carboxamide. It participates in purine metabolism; IMP biosynthesis via de novo pathway; 5-formamido-1-(5-phospho-D-ribosyl)imidazole-4-carboxamide from 5-amino-1-(5-phospho-D-ribosyl)imidazole-4-carboxamide (10-formyl THF route): step 1/1. The protein operates within purine metabolism; IMP biosynthesis via de novo pathway; IMP from 5-formamido-1-(5-phospho-D-ribosyl)imidazole-4-carboxamide: step 1/1. The chain is Bifunctional purine biosynthesis protein PurH from Prochlorococcus marinus (strain NATL2A).